Consider the following 319-residue polypeptide: Pre T-cell antigen receptor alpha (319 aa).

A signal peptide spans 1–16 (MAESWLLLLLALGCPA). Residues 17 to 160 (LPTEVTTLLR…LRGTRALVLR (144 aa)) lie on the Extracellular side of the membrane. Residues Cys58 and Cys118 are joined by a disulfide bond. A glycan (N-linked (GlcNAc...) asparagine) is linked at Asn78. The chain crosses the membrane as a helical span at residues 161–181 (LGALRLLLFKLLLLDVLLTCG). The Cytoplasmic segment spans residues 182–319 (RLHAPPAARG…PPADPSFPGG (138 aa)). The segment covering 189–207 (ARGDPAGASGPGAPSLPAP) has biased composition (low complexity). Residues 189–293 (ARGDPAGASG…VLRAWSSGPS (105 aa)) form a disordered region. A compositionally biased stretch (basic residues) spans 260-271 (RRRRVHTRRPRR).

Heterodimer with TCRB; disulfide linked. This heterodimer assembles with CD3 proteins into a signaling-competent pre-T-cell receptor complex. Interacts with RHBDD1.

The protein localises to the membrane. It is found in the cell membrane. In terms of biological role, component of the pre-T-cell receptor complex (composed of PTCRA, TCRB and the CD3 complex) that has a crucial role in early T-cell development, particularly alpha-beta T cell differentiation. The polypeptide is Pre T-cell antigen receptor alpha (PTCRA) (Bos taurus (Bovine)).